The chain runs to 186 residues: Interferon beta (186 aa).

Positions 1 to 21 (MTGRCILQIALLVCFFTTAHS) are cleaved as a signal peptide. At Tyr-24 the chain carries Phosphotyrosine. Asn-46, Asn-101, Asn-131, and Asn-136 each carry an N-linked (GlcNAc...) asparagine glycan. Cys-52 and Cys-161 form a disulfide bridge.

The protein belongs to the alpha/beta interferon family. In terms of assembly, monomer.

Its subcellular location is the secreted. Its function is as follows. Type I interferon cytokine that plays a key role in the innate immune response to infection, developing tumors and other inflammatory stimuli. Signals via binding to high-affinity (IFNAR2) and low-affinity (IFNAR1) heterodimeric receptor, activating the canonical Jak-STAT signaling pathway resulting in transcriptional activation or repression of interferon-regulated genes that encode the effectors of the interferon response, such as antiviral proteins, regulators of cell proliferation and differentiation, and immunoregulatory proteins. Signals mostly via binding to a IFNAR1-IFNAR2 heterodimeric receptor, but can also function with IFNAR1 alone and independently of Jak-STAT pathways. Elicits a wide variety of responses, including antiviral and antibacterial activities, and can regulate the development of B-cells, myelopoiesis and lipopolysaccharide (LPS)-inducible production of tumor necrosis factor. Plays a role in neuronal homeostasis by regulating dopamine turnover and protecting dopaminergic neurons: acts by promoting neuronal autophagy and alpha-synuclein clearance, thereby preventing dopaminergic neuron loss. IFNB1 is more potent than interferon-alpha (IFN-alpha) in inducing the apoptotic and antiproliferative pathways required for control of tumor cell growth. The polypeptide is Interferon beta (IFNB1) (Felis catus (Cat)).